Consider the following 82-residue polypeptide: Putative membrane protein insertion efficiency factor (82 aa).

It belongs to the UPF0161 family.

The protein resides in the cell inner membrane. Its function is as follows. Could be involved in insertion of integral membrane proteins into the membrane. This is Putative membrane protein insertion efficiency factor from Colwellia psychrerythraea (strain 34H / ATCC BAA-681) (Vibrio psychroerythus).